The sequence spans 217 residues: ATP phosphoribosyltransferase (217 aa).

This sequence belongs to the ATP phosphoribosyltransferase family. Short subfamily. Heteromultimer composed of HisG and HisZ subunits.

Its subcellular location is the cytoplasm. The enzyme catalyses 1-(5-phospho-beta-D-ribosyl)-ATP + diphosphate = 5-phospho-alpha-D-ribose 1-diphosphate + ATP. It functions in the pathway amino-acid biosynthesis; L-histidine biosynthesis; L-histidine from 5-phospho-alpha-D-ribose 1-diphosphate: step 1/9. Functionally, catalyzes the condensation of ATP and 5-phosphoribose 1-diphosphate to form N'-(5'-phosphoribosyl)-ATP (PR-ATP). Has a crucial role in the pathway because the rate of histidine biosynthesis seems to be controlled primarily by regulation of HisG enzymatic activity. The protein is ATP phosphoribosyltransferase of Burkholderia orbicola (strain MC0-3).